A 394-amino-acid polypeptide reads, in one-letter code: Na(+)/H(+) antiporter NhaA (394 aa).

11 helical membrane passes run 14–34, 59–79, 95–115, 125–145, 154–174, 179–199, 213–233, 254–274, 292–312, 328–348, and 363–383; these read AGGL…NSAL, LLLW…GLEV, VFPA…YLLF, GWAI…ALLG, VFLL…IALF, VSLQ…YMNW, LVLW…GVIV, GLHP…NAGV, IATG…WLAV, IFAV…IASL, and LGIL…LRLV.

It belongs to the NhaA Na(+)/H(+) (TC 2.A.33) antiporter family.

The protein resides in the cell inner membrane. The catalysed reaction is Na(+)(in) + 2 H(+)(out) = Na(+)(out) + 2 H(+)(in). Its function is as follows. Na(+)/H(+) antiporter that extrudes sodium in exchange for external protons. In Yersinia pseudotuberculosis serotype O:1b (strain IP 31758), this protein is Na(+)/H(+) antiporter NhaA.